Consider the following 446-residue polypeptide: Na(+)-translocating NADH-quinone reductase subunit A (446 aa).

The protein belongs to the NqrA family. Composed of six subunits; NqrA, NqrB, NqrC, NqrD, NqrE and NqrF.

It carries out the reaction a ubiquinone + n Na(+)(in) + NADH + H(+) = a ubiquinol + n Na(+)(out) + NAD(+). In terms of biological role, NQR complex catalyzes the reduction of ubiquinone-1 to ubiquinol by two successive reactions, coupled with the transport of Na(+) ions from the cytoplasm to the periplasm. NqrA to NqrE are probably involved in the second step, the conversion of ubisemiquinone to ubiquinol. The chain is Na(+)-translocating NADH-quinone reductase subunit A from Psychromonas ingrahamii (strain DSM 17664 / CCUG 51855 / 37).